The chain runs to 436 residues: Trigger factor (436 aa).

The 86-residue stretch at 163–248 (GDRVVLDFAG…VKEVAEGVLP (86 aa)) folds into the PPIase FKBP-type domain.

The protein belongs to the FKBP-type PPIase family. Tig subfamily.

Its subcellular location is the cytoplasm. It carries out the reaction [protein]-peptidylproline (omega=180) = [protein]-peptidylproline (omega=0). Functionally, involved in protein export. Acts as a chaperone by maintaining the newly synthesized protein in an open conformation. Functions as a peptidyl-prolyl cis-trans isomerase. In Bordetella pertussis (strain Tohama I / ATCC BAA-589 / NCTC 13251), this protein is Trigger factor.